The following is a 395-amino-acid chain: Calsequestrin-1 (395 aa).

Positions 1–28 (MNAADRMGARVALLLLLVLGSPQSGVHG) are cleaved as a signal peptide. Phosphotyrosine is present on tyrosine 37. The residue at position 75 (serine 75) is a Phosphoserine. Position 118 is a phosphothreonine (threonine 118). The residue at position 210 (serine 210) is a Phosphoserine. Asparagine 344 is a glycosylation site (N-linked (GlcNAc...) asparagine). The segment at 376–395 (EGEINTEDDDDEDDDDDDDD) is disordered.

Belongs to the calsequestrin family. Monomer; increases in response to a depletion of intracellular calcium. Homodimer. Homotetramer and homopolymer. Can form linear homooligomers. Ca(2+) ions promote oligomerization. Interacts (via C-terminal end and preferentially with the monomeric form) with STIM1; this interaction increases in response to a depletion of intracellular calcium, decreases both STIM1 aggregation and clustering, interaction of STIM1 with ORAI1 and store-operated Ca(2+) entry (SOCE) activity. Interacts with ASPH and TRDN. N-glycosylated. As to expression, detected in skeletal muscle (at protein level). Detected in skeletal muscle.

The protein localises to the endoplasmic reticulum. Its subcellular location is the sarcoplasmic reticulum. It is found in the sarcoplasmic reticulum lumen. It localises to the mitochondrion matrix. The protein resides in the sarcoplasmic reticulum membrane. Calsequestrin is a high-capacity, moderate affinity, calcium-binding protein and thus acts as an internal calcium store in muscle. Calcium ions are bound by clusters of acidic residues at the protein surface, often at the interface between subunits. Can bind around 80 Ca(2+) ions. Regulates the release of lumenal Ca(2+) via the calcium release channel RYR1; this plays an important role in triggering muscle contraction. Negatively regulates store-operated Ca(2+) entry (SOCE) activity. The polypeptide is Calsequestrin-1 (CASQ1) (Oryctolagus cuniculus (Rabbit)).